Here is a 424-residue protein sequence, read N- to C-terminus: Chloroquine resistance transporter (424 aa).

Topologically, residues 1–58 are cytoplasmic; it reads MKFASKKNNQKNSSKNDERYRELDNLVQEGNGSRLGGGSCLGKCAHVFKLIFKEIKDN. The helical transmembrane segment at 59 to 79 threads the bilayer; it reads IFIYILSIIYLSVCVMNKIFA. Topologically, residues 80–90 are vacuolar; the sequence is KRTLNKIGNYS. The N-linked (GlcNAc...) asparagine glycan is linked to Asn-88. A helical transmembrane segment spans residues 91–111; sequence FVTSETHNFICMIMFFIVYSL. Residues 112-127 lie on the Cytoplasmic side of the membrane; it reads FGNKKGNSKERHRSFN. The helical transmembrane segment at 128 to 148 threads the bilayer; it reads LQFFAISMLDACSVILAFIGL. Residues 149-154 are Vacuolar-facing; it reads TRTTGN. Residues 155–175 form a helical membrane-spanning segment; sequence IQSFVLQLSIPINMFFCFLIL. Residues 176-178 are Cytoplasmic-facing; sequence RYR. The helical transmembrane segment at 179 to 199 threads the bilayer; the sequence is YHLYNYLGAVIIVVTIALVEM. At 200 to 209 the chain is on the vacuolar side; that stretch reads KLSFETQEEN. The chain crosses the membrane as a helical span at residues 210–230; the sequence is SIIFNLVLISALIPVCFSNMT. Residues 231–248 are Cytoplasmic-facing; sequence REIVFKKYKIDILRLNAM. A helical membrane pass occupies residues 249-269; it reads VSFFQLFTSCLILPVYTLPFL. Residues 270 to 317 lie on the Vacuolar side of the membrane; the sequence is KQLHLPYNEIWTNIKNGFACLFLGRNTVVENCGLGMAKLCDDCDGAWK. 2 disulfide bridges follow: Cys-289–Cys-312 and Cys-301–Cys-309. A helical membrane pass occupies residues 318-338; that stretch reads TFALFSFFNICDNLITSYIID. Topologically, residues 339 to 346 are cytoplasmic; sequence KFSTMTYT. Residues 347-367 traverse the membrane as a helical segment; sequence IVSCIQGPAIAIAYYFKFLAG. The Vacuolar segment spans residues 368–377; sequence DVVREPRLLD. The helical transmembrane segment at 378-398 threads the bilayer; the sequence is FVTLFGYLFGSIIYRVGNIIL. At 399-424 the chain is on the cytoplasmic side; that stretch reads ERKKMRNEENEDSEGELTNVDSIITQ.

This sequence belongs to the CRT-like transporter family. Monomer.

Its subcellular location is the vacuole membrane. The enzyme catalyses L-arginine(in) = L-arginine(out). It catalyses the reaction L-lysine(in) = L-lysine(out). The catalysed reaction is L-histidine(out) = L-histidine(in). It carries out the reaction histamine(out) = histamine(in). The enzyme catalyses spermidine(in) = spermidine(out). It catalyses the reaction Fe(3+)(in) = Fe(3+)(out). The catalysed reaction is Fe(2+)(in) = Fe(2+)(out). Transporter activity is trans-stimulated by host-derived peptides containing 4-11 amino acids. Trans-stimulation by hemoglobin-derived peptide VDPVNF is pH-dependent and sodium-independent. Saquinavir trans-stimulates transport of hemoglobin-derived peptide VDPVNF. Protons are non-competitive inhibitors of chloroquine transport. In terms of biological role, nutrient transporter. Substrate transport is pH-dependent. Can transport arginine, lysine, histidine, peptides, histamine and spermidine. May modulate activity of endogenous transporters. Involved in maintaining the osmotic homeostasis of the digestive vacuole. Required for the asexual intraerythrocytic proliferation of parasites. Can transport Fe(2+) and Fe(3+). The protein is Chloroquine resistance transporter of Plasmodium falciparum.